A 1443-amino-acid polypeptide reads, in one-letter code: DNA polymerase III PolC-type (1443 aa).

An Exonuclease domain is found at 408–567; the sequence is FVIFDIETTG…YDTQALKKVF (160 aa).

It belongs to the DNA polymerase type-C family. PolC subfamily.

The protein resides in the cytoplasm. It catalyses the reaction DNA(n) + a 2'-deoxyribonucleoside 5'-triphosphate = DNA(n+1) + diphosphate. Functionally, required for replicative DNA synthesis. This DNA polymerase also exhibits 3' to 5' exonuclease activity. This is DNA polymerase III PolC-type from Mycoplasma pneumoniae (strain ATCC 29342 / M129 / Subtype 1) (Mycoplasmoides pneumoniae).